Here is a 129-residue protein sequence, read N- to C-terminus: Ribosome-binding factor A (129 aa).

Belongs to the RbfA family. As to quaternary structure, monomer. Binds 30S ribosomal subunits, but not 50S ribosomal subunits or 70S ribosomes.

The protein localises to the cytoplasm. Functionally, one of several proteins that assist in the late maturation steps of the functional core of the 30S ribosomal subunit. Associates with free 30S ribosomal subunits (but not with 30S subunits that are part of 70S ribosomes or polysomes). Required for efficient processing of 16S rRNA. May interact with the 5'-terminal helix region of 16S rRNA. This Actinobacillus succinogenes (strain ATCC 55618 / DSM 22257 / CCUG 43843 / 130Z) protein is Ribosome-binding factor A.